The following is a 565-amino-acid chain: Protein unc-87 (565 aa).

Residues 1–27 show a composition bias toward low complexity; sequence MLSFNNTTSASSFQSASSRYLMSSSSS. Disordered stretches follow at residues 1 to 83 and 237 to 262; these read MLSF…TTNS and IPSQ…RNTN. Basic and acidic residues predominate over residues 54 to 69; the sequence is EALERLRPNTASRERN. Calponin-like repeat units lie at residues 237 to 262, 285 to 310, and 338 to 363; these read IPSQ…RNTN, VRLQ…RDVC, and VRLQ…RRET. Residues 250–262 are compositionally biased toward polar residues; sequence KLMTNFGTPRNTN. Positions 369-381 are enriched in basic and acidic residues; sequence SKHPEYDHEKPDQ. A disordered region spans residues 369 to 400; that stretch reads SKHPEYDHEKPDQSEIPLQSGTNKFASQKGMT. Positions 384-398 are enriched in polar residues; sequence IPLQSGTNKFASQKG. 4 Calponin-like repeats span residues 384–409, 431–456, 472–497, and 517–542; these read IPLQ…RRET, IPSQ…RWEV, VRLQ…RNTT, and IPSQ…RDVK.

Belongs to the calponin family. As to quaternary structure, monomer. Interacts with F-actin. Interacts with myosin. In terms of tissue distribution, expressed in the body wall muscles. Isoform a: Expression in the pharynx, anal depressor muscle, uterine muscle, vulva and unidentified neurons in the head and the ventral region. Isoform b: Expression in the body wall muscles, spermatheca, vulva and in the myoepithelial sheath.

It localises to the cytoplasm. Its subcellular location is the myofibril. It is found in the sarcomere. The protein localises to the i band. Thin filament-associated protein that is implicated in actin bundling and actin filament dynamics. Exhibits F-actin cross-linking activity. Required for the maintenance of sarcomeric actin organization in striated muscles. Competes with unc-60 isoform b for actin binding and protects actin filaments from depolymerization by unc-60, thereby contributing to actin filament stability. Cooperates with myosin to form actomyosin bundles and inhibits actomyosin ATPase activity and actomyosin motility. Might protect the myofilaments from mechanical stress. Its function is as follows. Acts as a negative regulator of myosin-dependent contractility of smooth muscle-like cells in the somatic gonad. This Caenorhabditis elegans protein is Protein unc-87 (unc-87).